A 258-amino-acid polypeptide reads, in one-letter code: Acyl-[acyl-carrier-protein]--UDP-N-acetylglucosamine O-acyltransferase (258 aa).

It belongs to the transferase hexapeptide repeat family. LpxA subfamily. Homotrimer.

Its subcellular location is the cytoplasm. It catalyses the reaction a (3R)-hydroxyacyl-[ACP] + UDP-N-acetyl-alpha-D-glucosamine = a UDP-3-O-[(3R)-3-hydroxyacyl]-N-acetyl-alpha-D-glucosamine + holo-[ACP]. It participates in glycolipid biosynthesis; lipid IV(A) biosynthesis; lipid IV(A) from (3R)-3-hydroxytetradecanoyl-[acyl-carrier-protein] and UDP-N-acetyl-alpha-D-glucosamine: step 1/6. Involved in the biosynthesis of lipid A, a phosphorylated glycolipid that anchors the lipopolysaccharide to the outer membrane of the cell. In Thermodesulfovibrio yellowstonii (strain ATCC 51303 / DSM 11347 / YP87), this protein is Acyl-[acyl-carrier-protein]--UDP-N-acetylglucosamine O-acyltransferase.